Consider the following 320-residue polypeptide: Cytochrome f (320 aa).

The signal sequence occupies residues 1-35 (MQTRNTFFWIKEQMTRSISVSIIVYVITQTSISNA). Heme is bound by residues tyrosine 36, cysteine 56, cysteine 59, and histidine 60. Residues 286–306 (VQGLLFFFASVILAQIFLVLK) form a helical membrane-spanning segment.

The protein belongs to the cytochrome f family. In terms of assembly, the 4 large subunits of the cytochrome b6-f complex are cytochrome b6, subunit IV (17 kDa polypeptide, petD), cytochrome f and the Rieske protein, while the 4 small subunits are PetG, PetL, PetM and PetN. The complex functions as a dimer. It depends on heme as a cofactor.

The protein resides in the plastid. The protein localises to the chloroplast thylakoid membrane. Its function is as follows. Component of the cytochrome b6-f complex, which mediates electron transfer between photosystem II (PSII) and photosystem I (PSI), cyclic electron flow around PSI, and state transitions. In Buxus microphylla (Littleleaf boxwood), this protein is Cytochrome f.